The following is a 110-amino-acid chain: uncharacterized protein (110 aa).

The protein localises to the plastid. It localises to the chloroplast. This is an uncharacterized protein from Auxenochlorella pyrenoidosa (Freshwater green alga).